Consider the following 94-residue polypeptide: Small ribosomal subunit protein uS19 (94 aa).

The disordered stretch occupies residues 75–94; sequence SHTRTFKGHAGDKKAAGSKR. Residues 83-94 show a composition bias toward basic and acidic residues; the sequence is HAGDKKAAGSKR.

This sequence belongs to the universal ribosomal protein uS19 family.

Protein S19 forms a complex with S13 that binds strongly to the 16S ribosomal RNA. The protein is Small ribosomal subunit protein uS19 of Nitrosomonas europaea (strain ATCC 19718 / CIP 103999 / KCTC 2705 / NBRC 14298).